The sequence spans 634 residues: 3-dehydroshikimate dehydratase (634 aa).

Glutamate 134, aspartate 165, glutamine 191, and glutamate 239 together coordinate a divalent metal cation. VOC domains lie at 295 to 414 (GIEF…LVER) and 440 to 590 (RVDH…VFTE). Residues histidine 443, histidine 521, and glutamate 599 each contribute to the Mg(2+) site.

It belongs to the bacterial two-domain DSD family. As to quaternary structure, homodimer. The cofactor is Co(2+). It depends on Ni(2+) as a cofactor. Mg(2+) is required as a cofactor. Mn(2+) serves as cofactor.

The enzyme catalyses 3-dehydroshikimate = 3,4-dihydroxybenzoate + H2O. Its pathway is aromatic compound metabolism; 3,4-dihydroxybenzoate biosynthesis. Its function is as follows. Catalyzes the conversion of 3-dehydroshikimate to protocatechuate (3,4-dihydroxybenzoate), a common intermediate of quinate and shikimate degradation pathways. Is required for growth on either quinate or shikimate as a sole carbon source. In Pseudomonas aeruginosa (strain ATCC 15692 / DSM 22644 / CIP 104116 / JCM 14847 / LMG 12228 / 1C / PRS 101 / PAO1), this protein is 3-dehydroshikimate dehydratase.